Here is a 246-residue protein sequence, read N- to C-terminus: Cell division protein ZapD (246 aa).

The protein belongs to the ZapD family. Interacts with FtsZ.

Its subcellular location is the cytoplasm. In terms of biological role, cell division factor that enhances FtsZ-ring assembly. Directly interacts with FtsZ and promotes bundling of FtsZ protofilaments, with a reduction in FtsZ GTPase activity. This chain is Cell division protein ZapD, found in Vibrio vulnificus (strain CMCP6).